The following is a 362-amino-acid chain: RING finger protein 32 (362 aa).

The segment at 127–169 (CPICKEEFELRPQVLLSCSHVFHRACLQAFEKFTNKKTCPLCR) adopts an RING-type 1; atypical zinc-finger fold. The 30-residue stretch at 186 to 215 (RIKCVTRIQAYWRGYVVRKWYRNLRETVPP) folds into the IQ domain. The segment at 293–352 (CSICLAPLSPAGGQRVGAGQRSRETALLSCSHVFHHACLLALEEFSVGDRPPFHACPLCR) adopts an RING-type 2; atypical zinc-finger fold.

The protein localises to the cytoplasm. In terms of biological role, may play a role in sperm formation. The polypeptide is RING finger protein 32 (RNF32) (Macaca fascicularis (Crab-eating macaque)).